Here is a 388-residue protein sequence, read N- to C-terminus: MALQLLPSTLSVPKKGSSMGAVAVKDTAAFLGVSSKAKKASLAVRTQVATAPSPVTTSPGSTASSPSGKKTLRQGVVVITGASSGLGLAAAKALAETGKWHVVMACRDFLKASKAAKAAGMADGSYTVMHLDLASLDSVRQFVDAFRRAEMPLDVLVCNAAIYRPTARTPTFTADGHEMSVGVNHLGHFLLARLLMEDLQKSDYPSRRMVIVGSITGNSNTLAGNVPPKASLGDLRGLAGGLSGASGSAMIDGDESFDGAKAYKDSKVCNMLTMQEFHRRYHEETGITFSSLYPGCIATTGLFREHIPLFRTLFPPFQKFVTKGFVSEAESGKRLAQVVAEPVLTKSGVYWSWNKDSASFENQLSQEASDPEKARKVWELSEKLVGLA.

A chloroplast-targeting transit peptide spans 1-74 (MALQLLPSTL…SPSGKKTLRQ (74 aa)). Residues 48–68 (VATAPSPVTTSPGSTASSPSG) are compositionally biased toward low complexity. Positions 48–69 (VATAPSPVTTSPGSTASSPSGK) are disordered.

The protein belongs to the short-chain dehydrogenases/reductases (SDR) family. POR subfamily.

The protein resides in the plastid. The protein localises to the chloroplast. It catalyses the reaction chlorophyllide a + NADP(+) = protochlorophyllide a + NADPH + H(+). Its pathway is porphyrin-containing compound metabolism; chlorophyll biosynthesis. Phototransformation of protochlorophyllide (Pchlide) to chlorophyllide (Chlide). This is Protochlorophyllide reductase A, chloroplastic (PORA) from Hordeum vulgare (Barley).